We begin with the raw amino-acid sequence, 78 residues long: D-alanyl carrier protein (78 aa).

In terms of domain architecture, Carrier spans 1–78; it reads MEFKQEVLDV…NIVNKLTELK (78 aa). Ser36 is modified (O-(pantetheine 4'-phosphoryl)serine).

It belongs to the DltC family. 4'-phosphopantetheine is transferred from CoA to a specific serine of apo-DCP.

The protein localises to the cytoplasm. It functions in the pathway cell wall biogenesis; lipoteichoic acid biosynthesis. Functionally, carrier protein involved in the D-alanylation of lipoteichoic acid (LTA). The loading of thioester-linked D-alanine onto DltC is catalyzed by D-alanine--D-alanyl carrier protein ligase DltA. The DltC-carried D-alanyl group is further transferred to cell membrane phosphatidylglycerol (PG) by forming an ester bond, probably catalyzed by DltD. D-alanylation of LTA plays an important role in modulating the properties of the cell wall in Gram-positive bacteria, influencing the net charge of the cell wall. The chain is D-alanyl carrier protein from Bacillus velezensis (strain DSM 23117 / BGSC 10A6 / LMG 26770 / FZB42) (Bacillus amyloliquefaciens subsp. plantarum).